We begin with the raw amino-acid sequence, 772 residues long: Alpha-xylosidase (772 aa).

Aspartate 416 serves as the catalytic Nucleophile. Glutamate 419 is a catalytic residue. Aspartate 482 (proton donor) is an active-site residue.

The protein belongs to the glycosyl hydrolase 31 family. Homohexamer.

It carries out the reaction Hydrolysis of terminal, non-reducing alpha-D-xylose residues with release of alpha-D-xylose.. Its function is as follows. Can catalyze the transfer of alpha-xylosyl residue from alpha-xyloside to xylose, glucose, mannose, fructose, maltose, isomaltose, nigerose, kojibiose, sucrose and trehalose. This chain is Alpha-xylosidase (yicI), found in Escherichia coli (strain K12).